Reading from the N-terminus, the 397-residue chain is Elongation factor Tu (397 aa).

One can recognise a tr-type G domain in the interval 10 to 207; it reads KPHVNVGTIG…TLDTYIPEPV (198 aa). The G1 stretch occupies residues 19–26; the sequence is GHVDHGKT. 19–26 lines the GTP pocket; that stretch reads GHVDHGKT. Mg(2+) is bound at residue Thr-26. The G2 stretch occupies residues 60-64; that stretch reads GITIN. The interval 81–84 is G3; sequence DCPG. GTP contacts are provided by residues 81-85 and 136-139; these read DCPGH and NKAD. The segment at 136–139 is G4; sequence NKAD. Positions 174-176 are G5; sequence SAL.

This sequence belongs to the TRAFAC class translation factor GTPase superfamily. Classic translation factor GTPase family. EF-Tu/EF-1A subfamily. Monomer.

The protein localises to the cytoplasm. It carries out the reaction GTP + H2O = GDP + phosphate + H(+). In terms of biological role, GTP hydrolase that promotes the GTP-dependent binding of aminoacyl-tRNA to the A-site of ribosomes during protein biosynthesis. The polypeptide is Elongation factor Tu (Ectopseudomonas mendocina (strain ymp) (Pseudomonas mendocina)).